The following is a 403-amino-acid chain: uncharacterized protein (403 aa).

Residue H81 participates in Zn(2+) binding. Residue D83 is part of the active site. D114 is a binding site for Zn(2+). E148 serves as the catalytic Proton acceptor. Zn(2+) is bound by residues E149, E174, and H374.

The protein belongs to the peptidase M20A family. Zn(2+) is required as a cofactor. Requires Co(2+) as cofactor.

This is an uncharacterized protein from Escherichia coli O157:H7.